Reading from the N-terminus, the 697-residue chain is Potassium-transporting ATPase ATP-binding subunit (697 aa).

4 consecutive transmembrane segments (helical) span residues 55 to 75, 79 to 99, 245 to 265, and 271 to 291; these read PIMFVVEIGFIITFILSFLPS, SIPGWFNITVSLILLFTVLFA, LTLIFLIVVVTLPIFTNYLGF, and VLVALLVCLIPTTIGGLLSAI. Aspartate 324 acts as the 4-aspartylphosphate intermediate in catalysis. Residues aspartate 361, glutamate 365, 393–400, and lysine 412 contribute to the ATP site; that span reads FKAETRMS. Mg(2+) is bound by residues aspartate 535 and aspartate 539. Helical transmembrane passes span 605-625, 633-653, and 677-697; these read FAIIPAMFTLAIPQMEALNIM, AILSALIFNAVIIPLLIPLAM, and GGVIVPFIGIKVIDIIVGLFI.

This sequence belongs to the cation transport ATPase (P-type) (TC 3.A.3) family. Type IA subfamily. As to quaternary structure, the system is composed of three essential subunits: KdpA, KdpB and KdpC.

The protein localises to the cell membrane. It carries out the reaction K(+)(out) + ATP + H2O = K(+)(in) + ADP + phosphate + H(+). Its function is as follows. Part of the high-affinity ATP-driven potassium transport (or Kdp) system, which catalyzes the hydrolysis of ATP coupled with the electrogenic transport of potassium into the cytoplasm. This subunit is responsible for energy coupling to the transport system and for the release of the potassium ions to the cytoplasm. The sequence is that of Potassium-transporting ATPase ATP-binding subunit from Bacillus cereus (strain G9842).